A 395-amino-acid polypeptide reads, in one-letter code: Putative pyridoxal phosphate-dependent acyltransferase (395 aa).

110–111 (GF) is a pyridoxal 5'-phosphate binding site. Histidine 135 is a substrate binding site. Pyridoxal 5'-phosphate is bound by residues serine 185, 210–213 (DDAH), and 240–243 (TLSK). Lysine 243 is subject to N6-(pyridoxal phosphate)lysine. Threonine 357 is a substrate binding site.

It belongs to the class-II pyridoxal-phosphate-dependent aminotransferase family. Homodimer. Requires pyridoxal 5'-phosphate as cofactor.

This chain is Putative pyridoxal phosphate-dependent acyltransferase, found in Staphylococcus aureus (strain Mu50 / ATCC 700699).